Here is a 350-residue protein sequence, read N- to C-terminus: Heat-inducible transcription repressor HrcA (350 aa).

This sequence belongs to the HrcA family.

Negative regulator of class I heat shock genes (grpE-dnaK-dnaJ and groELS operons). Prevents heat-shock induction of these operons. The protein is Heat-inducible transcription repressor HrcA of Xanthomonas campestris pv. campestris (strain ATCC 33913 / DSM 3586 / NCPPB 528 / LMG 568 / P 25).